Reading from the N-terminus, the 302-residue chain is N-acetylmuramic acid 6-phosphate etherase (302 aa).

Residues 57 to 220 (VSEKLKNNGR…TTAVMIKLGK (164 aa)) enclose the SIS domain. Residue Glu-85 is the Proton donor of the active site. Residue Glu-116 is part of the active site.

The protein belongs to the GCKR-like family. MurNAc-6-P etherase subfamily. Homodimer.

The enzyme catalyses N-acetyl-D-muramate 6-phosphate + H2O = N-acetyl-D-glucosamine 6-phosphate + (R)-lactate. It participates in amino-sugar metabolism; N-acetylmuramate degradation. Functionally, specifically catalyzes the cleavage of the D-lactyl ether substituent of MurNAc 6-phosphate, producing GlcNAc 6-phosphate and D-lactate. The protein is N-acetylmuramic acid 6-phosphate etherase of Clostridium acetobutylicum (strain ATCC 824 / DSM 792 / JCM 1419 / IAM 19013 / LMG 5710 / NBRC 13948 / NRRL B-527 / VKM B-1787 / 2291 / W).